The following is a 214-amino-acid chain: Membrane antigen containing repeating peptides (214 aa).

4 repeat units span residues 1 to 14 (QETS…EETL), 15 to 28 (QETS…EETL), 29 to 42 (QETS…EETL), and 43 to 56 (QETS…EETL). Positions 1-31 (QETSAKLADTEETLQETSAKLADTEETLQET) are disordered. Positions 1–56 (QETSAKLADTEETLQETSAKLADTEETLQETSAKLADTEETLQETSAKLADTEETL) are 4 X 14 AA tandem repeats. The tract at residues 180–214 (CSLHPTPRRLGDVSNRENSIENKTRSASRLSGRLF) is disordered. Basic and acidic residues predominate over residues 188–203 (RLGDVSNRENSIENKT).

Its subcellular location is the membrane. This is Membrane antigen containing repeating peptides from Leishmania major.